The following is a 173-amino-acid chain: Translationally-controlled tumor protein homolog (173 aa).

The TCTP domain maps to 1-173 (MIIYKDILTG…WKHGLEEYKV (173 aa)).

It belongs to the TCTP family.

It is found in the cytoplasm. The protein localises to the cytoskeleton. Functionally, involved in protein synthesis. Involved in microtubule stabilization. This is Translationally-controlled tumor protein homolog from Aspergillus oryzae (strain ATCC 42149 / RIB 40) (Yellow koji mold).